Consider the following 201-residue polypeptide: High mobility group protein homolog 068R (201 aa).

2 consecutive DNA-binding regions (HMG box) follow at residues 70–138 (PKRN…ELEK) and 143–201 (TPSK…KAAK).

The protein belongs to the IIV-6 401R family.

It localises to the host nucleus. This is High mobility group protein homolog 068R from Invertebrate iridescent virus 3 (IIV-3).